We begin with the raw amino-acid sequence, 360 residues long: Phospho-N-acetylmuramoyl-pentapeptide-transferase (360 aa).

A run of 10 helical transmembrane segments spans residues 27–47 (GAMI…INSL), 71–91 (TPTM…LLWA), 93–113 (LASV…AIGF), 128–148 (FSGK…AFTI), 168–188 (LVIN…VGAG), 199–219 (GLAI…AYLS), 239–259 (LAVV…FNAP), 262–282 (AIFM…TVAV), 288–308 (IVLA…IIQV), and 337–357 (QVVI…LSTL).

It belongs to the glycosyltransferase 4 family. MraY subfamily. Mg(2+) serves as cofactor.

It localises to the cell inner membrane. The enzyme catalyses UDP-N-acetyl-alpha-D-muramoyl-L-alanyl-gamma-D-glutamyl-meso-2,6-diaminopimeloyl-D-alanyl-D-alanine + di-trans,octa-cis-undecaprenyl phosphate = di-trans,octa-cis-undecaprenyl diphospho-N-acetyl-alpha-D-muramoyl-L-alanyl-D-glutamyl-meso-2,6-diaminopimeloyl-D-alanyl-D-alanine + UMP. It participates in cell wall biogenesis; peptidoglycan biosynthesis. In terms of biological role, catalyzes the initial step of the lipid cycle reactions in the biosynthesis of the cell wall peptidoglycan: transfers peptidoglycan precursor phospho-MurNAc-pentapeptide from UDP-MurNAc-pentapeptide onto the lipid carrier undecaprenyl phosphate, yielding undecaprenyl-pyrophosphoryl-MurNAc-pentapeptide, known as lipid I. This chain is Phospho-N-acetylmuramoyl-pentapeptide-transferase, found in Brucella ovis (strain ATCC 25840 / 63/290 / NCTC 10512).